The chain runs to 482 residues: Anaerobic nitric oxide reductase flavorubredoxin (482 aa).

The zinc metallo-hydrolase stretch occupies residues Leu-30–Ile-210. Residues His-79, Glu-81, Asp-83, His-147, Asp-166, and His-227 each contribute to the Fe cation site. Residues Ile-254–Ala-393 enclose the Flavodoxin-like domain. Residues Thr-260–Asn-264 and Ala-342–Leu-369 each bind FMN. The 52-residue stretch at Gly-426–Leu-477 folds into the Rubredoxin-like domain. The Fe cation site is built by Cys-431, Cys-434, Cys-464, and Cys-467.

This sequence in the N-terminal section; belongs to the zinc metallo-hydrolase group 3 family. Homotetramer. Fe cation is required as a cofactor. FMN serves as cofactor.

It localises to the cytoplasm. It functions in the pathway nitrogen metabolism; nitric oxide reduction. In terms of biological role, anaerobic nitric oxide reductase; uses NADH to detoxify nitric oxide (NO), protecting several 4Fe-4S NO-sensitive enzymes. Has at least 2 reductase partners, only one of which (NorW, flavorubredoxin reductase) has been identified. NO probably binds to the di-iron center; electrons enter from the NorW at rubredoxin and are transferred sequentially to the FMN center and the di-iron center. Also able to function as an aerobic oxygen reductase. The protein is Anaerobic nitric oxide reductase flavorubredoxin of Klebsiella pneumoniae subsp. pneumoniae (strain ATCC 700721 / MGH 78578).